The chain runs to 370 residues: MIERRKTRAVKVGRVQIGGGAPITVQSMTKCDTRDVPEVLRQIRALEEAGCDIVRVAAPTMEAAECFKEIRKGCNIPLVADVHFDYRIALKVLEAGIDKLRINPGNIGARWKVEEVVRACKDRGVPIRIGVNAGSLEEEFLEKYGYPTADGMVESALKHVAILEELDFHDIVISIKSSRVDQMIEAYRKLSEKVDYPLHVGVTEAGTPFAGTIKSAVGIGTILAEGIGDTIRVSLSTDCVEEVRVGYEILKALGLRTRGINIISCPSCGRVQIDLVKVANEVERRLQHIDVPLNVAVMGCVVNGPGEAAEADVALFGGKGVGMLYVGGERVRKTTEEEMVEALVELVEQKAAEIKASGRVPTGYGRHEER.

Cys265, Cys268, Cys300, and Glu307 together coordinate [4Fe-4S] cluster.

Belongs to the IspG family. [4Fe-4S] cluster serves as cofactor.

It carries out the reaction (2E)-4-hydroxy-3-methylbut-2-enyl diphosphate + oxidized [flavodoxin] + H2O + 2 H(+) = 2-C-methyl-D-erythritol 2,4-cyclic diphosphate + reduced [flavodoxin]. The protein operates within isoprenoid biosynthesis; isopentenyl diphosphate biosynthesis via DXP pathway; isopentenyl diphosphate from 1-deoxy-D-xylulose 5-phosphate: step 5/6. In terms of biological role, converts 2C-methyl-D-erythritol 2,4-cyclodiphosphate (ME-2,4cPP) into 1-hydroxy-2-methyl-2-(E)-butenyl 4-diphosphate. The sequence is that of 4-hydroxy-3-methylbut-2-en-1-yl diphosphate synthase (flavodoxin) from Symbiobacterium thermophilum (strain DSM 24528 / JCM 14929 / IAM 14863 / T).